Consider the following 258-residue polypeptide: UBX domain-containing protein 2A (258 aa).

The required for interaction with CHRNA3 stretch occupies residues 1–152; it reads MKEVDNLDSI…SATPRIVSKA (152 aa). Positions 1–165 are required for inhibition of CHRNA3 ubiquitination and translocation of CHRNA3 to the plasma membrane resulting in an increase in acetylcholine-gated nicotinic acetylcholine receptor currents; it reads MKEVDNLDSI…EVDNKSTLSA (165 aa). In terms of domain architecture, SEP spans 61–125; the sequence is QVDVNIKLWK…VEDKKNEVCM (65 aa). The tract at residues 168 to 258 is required for interaction with VCP; that stretch reads LNNLEPITRI…QKTAEPFRKL (91 aa). One can recognise a UBX domain in the interval 170–247; the sequence is NLEPITRIQI…DLQNAVIIQR (78 aa).

In terms of assembly, part of a complex composed of STUB1/CHIP, VCP/p97, CHRNA3, and UBXN2A that modulates the ubiquitination and endoplasmic reticulum-associated degradation (ERAD) of CHRNA3. Within the complex UBXN2A acts as a scaffold protein required for the interaction of CHRNA3 with VCP/p97, this interaction also inhibits CHRNA3 ubiquitination by STUB1/CHIP and subsequently ERAD. Interacts (via SEP domain) with CHRNA3 and interacts (via UBX domain) with VCP/P97; these interactions are required for the interaction of CHRNA3 with the STUB1-VCP-UBXN2A complex. Interacts with HSPA9/MOT-2 (via SBD domain); the interaction inhibits HSPA9/MOT-2 interaction with and degradation of p53, thereby promotes p53 translocation to the nucleus. Interacts with RICTOR. Ubiquitinated.

The protein resides in the golgi apparatus. It is found in the endoplasmic reticulum. It localises to the perikaryon. The protein localises to the cell projection. Its subcellular location is the dendrite. The protein resides in the nucleus. It is found in the cytoplasm. Its function is as follows. Acts to repress the ubiquitination and subsequent endoplasmic reticulum-associated degradation of CHRNA3 by the STUB1-VCP-UBXN2A complex in cortical neurons. Also acts to promote the translocation of CHRNA3 to the plasma membrane and subsequently increases plasma membrane acetylcholine-gated ion-channel activation. Plays a role in the inhibition of STUB1-mediated TP53 degradation, via its interaction with HSPA9 which acts to inhibit TP53 binding to HSPA9. Positively mediates the ubiquitination and proteosomal degradation of RICTOR, may thereby act as a negative regulator of the mTORC2 pathway. In Rattus norvegicus (Rat), this protein is UBX domain-containing protein 2A.